A 182-amino-acid polypeptide reads, in one-letter code: Malignant T-cell-amplified sequence 1 homolog (182 aa).

Positions 93 to 172 (VTMQQVDKGA…IGIETYHFLN (80 aa)) constitute a PUA domain.

This sequence belongs to the MCTS1 family. In terms of assembly, interacts with DENR.

The protein resides in the cytoplasm. In terms of biological role, regulates translation as part of a complex with DENR. Specifically required for translational re-initiation in mRNAs containing upstream open reading frames (uORFs). Not required for standard translational initiation. Regulates expression of a subset of gene products including mbc, InR and EcR. This chain is Malignant T-cell-amplified sequence 1 homolog, found in Drosophila melanogaster (Fruit fly).